A 269-amino-acid polypeptide reads, in one-letter code: Shikimate dehydrogenase (NADP(+)) (269 aa).

Residues 17 to 19 and Thr64 contribute to the shikimate site; that span reads SKS. Residue Lys68 is the Proton acceptor of the active site. Glu80 lines the NADP(+) pocket. Shikimate contacts are provided by Asn89 and Asp105. Residues 130 to 134, 154 to 159, and Met213 contribute to the NADP(+) site; these read GAGGA and NRTHAK. Tyr215 lines the shikimate pocket. Gly237 lines the NADP(+) pocket.

The protein belongs to the shikimate dehydrogenase family. In terms of assembly, homodimer.

The catalysed reaction is shikimate + NADP(+) = 3-dehydroshikimate + NADPH + H(+). It participates in metabolic intermediate biosynthesis; chorismate biosynthesis; chorismate from D-erythrose 4-phosphate and phosphoenolpyruvate: step 4/7. Involved in the biosynthesis of the chorismate, which leads to the biosynthesis of aromatic amino acids. Catalyzes the reversible NADPH linked reduction of 3-dehydroshikimate (DHSA) to yield shikimate (SA). This is Shikimate dehydrogenase (NADP(+)) from Neisseria pharyngis.